The primary structure comprises 161 residues: Phosphopantetheine adenylyltransferase (161 aa).

A substrate-binding site is contributed by threonine 11. ATP-binding positions include 11–12 (TF) and histidine 19. Substrate contacts are provided by lysine 43, threonine 75, and arginine 89. Residues 90-92 (GLR), glutamate 100, and 125-131 (YSFLSSS) contribute to the ATP site.

This sequence belongs to the bacterial CoaD family. In terms of assembly, homohexamer. Requires Mg(2+) as cofactor.

It is found in the cytoplasm. It catalyses the reaction (R)-4'-phosphopantetheine + ATP + H(+) = 3'-dephospho-CoA + diphosphate. It participates in cofactor biosynthesis; coenzyme A biosynthesis; CoA from (R)-pantothenate: step 4/5. Reversibly transfers an adenylyl group from ATP to 4'-phosphopantetheine, yielding dephospho-CoA (dPCoA) and pyrophosphate. The sequence is that of Phosphopantetheine adenylyltransferase from Listeria welshimeri serovar 6b (strain ATCC 35897 / DSM 20650 / CCUG 15529 / CIP 8149 / NCTC 11857 / SLCC 5334 / V8).